The primary structure comprises 1204 residues: MIDVNNFEYMKIGLASPDKIRSWSYGEVKKPETINYRTLKPEKDGLFCERIFGPQKDWECHCGKYKRVRYKGVVCDRCGVEVTRAKVRRERMGHIELAAPVSHIWYFKGIPSRMGLVLDMSPRALEEVIYFASYVVTESGDTPLDKKQLLSEKEYRAYRDRYGNTFQAAMGAEAIKKLLQDIDLDKEVDFLKEELKTAQGQRRTRAIKRLEVLESFRNSGNKPSWMILDVLPVIPPELRPMVQLDGGRFATSDLNDLYRRVINRNNRLKRLLDLGAPSIIVQNEKRMLQEAVDALIDNGRRGRPVTGPGNRPLKSLSHMLKGKQGRFRQNLLGKRVDYSGRSVIVVGPNLKMYQCGLPKEMALELFKPFVMKELVEKGLAHNIKSAKRKIERVQPEVWDVLESVIKEHPVLLNRAPTLHRLGIQAFEPTLVEGRAIRLHPLVCTAYNADFDGDQMAVHVPLSSEAQAEARLLMLAAQNILNPKDGKPVVTPSQDMVLGNYYLTLERAGAIGEGMVFKDTNEALLAYQNGYVHLHTRIAVPASSVNNNETFTEEQKGKLLLTTVGKLIFNEILPKSFPYINEPTKSNLEKETPAKYFVDKGANIKEVIASREEVAPFNKKILGNIIAEVFKRFKITETSRMLDRMKDLGFKYSTKAGITVGVADILVLGEKDEILHEAQAKVDKVIKQFRRGLITEEERYDRVISIWSNAKDVIQGKLMKSLDKRNPIFMMSDSGARGNASNFTQLAGMRGLMANPSGRIIELPIKSSFREGLTVLEYFISTHGARKGLADTALKTADSGYLTRRLVDVAQDVIVREDDCGTDRGLLIGAIKEGNEVIESLYDRLVGRFARKTVKHPETGEVLIRENELITEDIARAIENAGVETVHIRSAFTCNTRHGVCKKCYGRNLATGTDVEVGEAVGIIAAQSIGEPGTQLTMRTFHTGGVAGDDITQGLPRIQEIFEARNPKGQAVISEIDGVVVTINDVKDRQEVVVQGAVETRTYAIPYGARLKVTPGQEISHGQELTEGSIDPKELLKVTDITAVQEYLLREVQKVYRMQGVEIGDKHVEVMVRQMLRKVRVIDAGDTDVLPGTLLDIHQFTDANVKVLLEGKQPATARPVLLGITKASLETDSFLSAASFQETTRVLTDAAIKGKRDELLGLKENVIIGKLVPAGTGMNRYRKVDLVKTVQDDTNVENDEIYVEQ.

Cys60, Cys62, Cys75, and Cys78 together coordinate Zn(2+). Positions 449, 451, and 453 each coordinate Mg(2+). Zn(2+)-binding residues include Cys819, Cys893, Cys900, and Cys903.

It belongs to the RNA polymerase beta' chain family. In terms of assembly, the RNAP catalytic core consists of 2 alpha, 1 beta, 1 beta' and 1 omega subunit. When a sigma factor is associated with the core the holoenzyme is formed, which can initiate transcription. Requires Mg(2+) as cofactor. It depends on Zn(2+) as a cofactor.

It catalyses the reaction RNA(n) + a ribonucleoside 5'-triphosphate = RNA(n+1) + diphosphate. Its function is as follows. DNA-dependent RNA polymerase catalyzes the transcription of DNA into RNA using the four ribonucleoside triphosphates as substrates. The chain is DNA-directed RNA polymerase subunit beta' from Bacillus cytotoxicus (strain DSM 22905 / CIP 110041 / 391-98 / NVH 391-98).